Reading from the N-terminus, the 317-residue chain is Melanocyte-stimulating hormone receptor (317 aa).

Residues Met1–Glu37 lie on the Extracellular side of the membrane. Asn29 carries an N-linked (GlcNAc...) asparagine glycan. Residues Val38–Ile63 form a helical membrane-spanning segment. Residues Ala64–Pro72 are Cytoplasmic-facing. The helical transmembrane segment at Met73–Leu93 threads the bilayer. The Extracellular portion of the chain corresponds to Glu94 to Asn118. A helical membrane pass occupies residues Thr119 to Val140. The Cytoplasmic segment spans residues Asp141–Arg163. The helical transmembrane segment at Val164–Tyr183 threads the bilayer. Topologically, residues Asp184 to Cys191 are extracellular. A helical transmembrane segment spans residues Leu192–Leu211. At Ala212 to Ala240 the chain is on the cytoplasmic side. The helical transmembrane segment at Ala241–Phe266 threads the bilayer. Residues Cys267–Asn279 are Extracellular-facing. A helical membrane pass occupies residues Phe280–Phe300. Topologically, residues Arg301–Trp317 are cytoplasmic. The S-palmitoyl cysteine moiety is linked to residue Cys315.

It belongs to the G-protein coupled receptor 1 family. Interacts with MGRN1, but does not undergo MGRN1-mediated ubiquitination; this interaction competes with GNAS-binding and thus inhibits agonist-induced cAMP production. Interacts with OPN3; the interaction results in a decrease in MC1R-mediated cAMP signaling and ultimately a decrease in melanin production in melanocytes.

It localises to the cell membrane. In terms of biological role, receptor for MSH (alpha, beta and gamma) and ACTH. The activity of this receptor is mediated by G proteins which activate adenylate cyclase. Mediates melanogenesis, the production of eumelanin (black/brown) and phaeomelanin (red/yellow), via regulation of cAMP signaling in melanocytes. This Saimiri oerstedii (Central American squirrel monkey) protein is Melanocyte-stimulating hormone receptor (MC1R).